The sequence spans 135 residues: Holo-[acyl-carrier-protein] synthase (135 aa).

The Mg(2+) site is built by D7 and E57.

Belongs to the P-Pant transferase superfamily. AcpS family. Requires Mg(2+) as cofactor.

It is found in the cytoplasm. The enzyme catalyses apo-[ACP] + CoA = holo-[ACP] + adenosine 3',5'-bisphosphate + H(+). Functionally, transfers the 4'-phosphopantetheine moiety from coenzyme A to a Ser of acyl-carrier-protein. The sequence is that of Holo-[acyl-carrier-protein] synthase from Corynebacterium glutamicum (strain ATCC 13032 / DSM 20300 / JCM 1318 / BCRC 11384 / CCUG 27702 / LMG 3730 / NBRC 12168 / NCIMB 10025 / NRRL B-2784 / 534).